The primary structure comprises 431 residues: Fumarylacetoacetase fahA (431 aa).

D133 provides a ligand contact to Ca(2+). Y135 lines the substrate pocket. H140 acts as the Proton acceptor in catalysis. R149 is a substrate binding site. Residues E209, E211, and D243 each contribute to the Ca(2+) site. A Mg(2+)-binding site is contributed by D243. 2 residues coordinate substrate: Q250 and Y254. Mg(2+) contacts are provided by K263 and T267. T362 provides a ligand contact to substrate. Residues 362-381 show a composition bias toward polar residues; that stretch reads TISGKENQTQGSLLEQTNGK. The disordered stretch occupies residues 362 to 382; sequence TISGKENQTQGSLLEQTNGKN.

The protein belongs to the FAH family. Ca(2+) serves as cofactor. Requires Mg(2+) as cofactor.

The enzyme catalyses 4-fumarylacetoacetate + H2O = acetoacetate + fumarate + H(+). It functions in the pathway amino-acid degradation; L-phenylalanine degradation; acetoacetate and fumarate from L-phenylalanine: step 6/6. In terms of biological role, fumarylacetoacetase; part of the L-tyrosine degradation gene cluster that mediates the biosynthesis of the brownish pigment pyomelanin as an alternative melanin. The 4-hydroxyphenylpyruvate dioxygenase hppD catalyzes the conversion of 4-hydroxyphenylpyruvate to homogentisic acid (HGA). The protein hmgX is crucial for this conversion and thus, probably functions as an accessory factor to mediate specific activity of hppD. The homogentisate 1,2-dioxygenase hmgA is then involved in the cleavage of the aromatic ring of HGA and its conversion to 4-maleylacetoacetate. When hmgA activity is lowered by the cell wall integrity (CWI) signaling pathway, HGA accumulates and leads to the production of pyomelanin through benzoquinone acetic acid after oxidation and polymerization. On the opposite, in non-stress conditions, both hppD and hmgA activities are balanced and HGA is degraded into 4-maleylacetoacetate. 4-maleylacetoacetate is further converted to 4-fumarylacetoacetate by the maleylacetoacetate isomerase maiA, which is degraded into fumarate and acetoacetate by the fumarylacetoacetase fahA. The sequence is that of Fumarylacetoacetase fahA from Aspergillus fumigatus (strain ATCC MYA-4609 / CBS 101355 / FGSC A1100 / Af293) (Neosartorya fumigata).